A 334-amino-acid chain; its full sequence is Zinc-finger homeodomain protein 10 (334 aa).

Residues 1–15 (MMDMTPTITTTTTPT) show a composition bias toward low complexity. 2 disordered regions span residues 1–33 (MMDMTPTITTTTTPTPKSPEPESETPTRIQPAK) and 103–164 (FHRR…LLSL). The segment at 56–107 (YKECLKNHAAALGGHALDGCGEFMPSPSSISSDPTSLKCAACGCHRNFHRRD) adopts a ZF-HD dimerization-type; degenerate zinc-finger fold. Residues 136 to 155 (PPPPPPPPPRSPNSASPPPI) are compositionally biased toward pro residues. Positions 200–263 (RKRFRTKFSQ…NNKNTFNRRD (64 aa)) form a DNA-binding region, homeobox. The tract at residues 292-334 (NGHHGVGGGGELHQSVSSGGGGGGFDSDSGGANGGNVNGSSSS) is disordered. Residues 309–328 (SGGGGGGFDSDSGGANGGNV) show a composition bias toward gly residues.

As to quaternary structure, homo- and heterodimer with other ZFHD proteins. Interacts with MIF1, MIF2 and MIF3; these interactions prevent nuclear localization and DNA-binding to inhibit transcription regulation activity. Binds to ZHD1, ZHD2, ZHD4, ZHD5, ZHD6, ZHD7 and ZHD8. Interacts with KIN10 and KIN11. In terms of tissue distribution, mostly expressed in rosettes (e.g. young leaves), flowers (e.g. styles), siliques and inflorescence.

The protein localises to the nucleus. Functionally, putative transcription factor. Probably involved in establishing polarity during leaf development through the gibberellic acid (GA) signaling pathway. The sequence is that of Zinc-finger homeodomain protein 10 (ZHD10) from Arabidopsis thaliana (Mouse-ear cress).